We begin with the raw amino-acid sequence, 1105 residues long: KAT8 regulatory NSL complex subunit 1 (1105 aa).

Residue K104 is modified to N6-acetyllysine. Disordered regions lie at residues 145–211 (GQTA…CTLP) and 225–263 (NNST…GVKL). Positions 225-258 (NNSTANKSSVNSMEQPALQGSSRLSPGTDSSSNL) are enriched in polar residues. Position 249 is a phosphoserine (S249). K262 is covalently cross-linked (Glycyl lysine isopeptide (Lys-Gly) (interchain with G-Cter in SUMO2)). S268 carries the phosphoserine modification. The stretch at 283–314 (RITALLRRQADIESRARRLQKRLQVVQAKQVE) forms a coiled coil. A Glycyl lysine isopeptide (Lys-Gly) (interchain with G-Cter in SUMO2) cross-link involves residue K331. Disordered stretches follow at residues 399–426 (DSDV…PEQR) and 733–857 (TAKL…RRGE). 2 stretches are compositionally biased toward basic and acidic residues: residues 741-753 (TRPD…HLDD) and 780-804 (DPNH…HHTD). Positions 827–850 (STSSDSPAPASSSSQVTASTSQQP) are enriched in low complexity. Positions 850-882 (PVRRRRGESSFDINNIVIPMSVAATTRVEKLQY) are required for activation of KAT8 histone acetyltransferase activity. Positions 884-1035 (EILTPSWREV…GLDEQSVQPW (152 aa)) constitute a PEHE domain. Positions 910–928 (EDLSDAAFAALHAKCEEME) are interaction with KAT8 HAT domain. The segment at 938–1034 (VPPQRRGSRS…LGLDEQSVQP (97 aa)) is disordered. Residues 955–965 (TTPQLGSANPS) are compositionally biased toward polar residues. Residues 975-988 (SSSHSLSEYSHGQS) show a composition bias toward low complexity. S991 and S994 each carry phosphoserine. A Phosphothreonine modification is found at T1003. Basic and acidic residues predominate over residues 1008–1019 (DTPRHLASEDTR). Residue S1045 is modified to Phosphoserine. The segment at 1058 to 1105 (ERAARCTRRTSGSKTGRETEAAPTSPPIVPLKSRHLVAAATAQRPTHR) is disordered.

In terms of assembly, component of the NSL complex at least composed of MOF/KAT8, KANSL1, KANSL2, KANSL3, MCRS1, PHF20, OGT1/OGT, WDR5 and HCFC1. Interacts (via PEHE domain) with KAT8 (via HAT domain); the interaction is direct. Component of some MLL1/MLL complex, at least composed of the core components KMT2A/MLL1, ASH2L, HCFC1, WDR5 and RBBP5, as well as the facultative components BACC1, CHD8, E2F6, HSP70, INO80C, KANSL1, LAS1L, MAX, MCRS1, MGA, KAT8/MOF, PELP1, PHF20, PRP31, RING2, RUVB1/TIP49A, RUVB2/TIP49B, SENP3, TAF1, TAF4, TAF6, TAF7, TAF9 and TEX10. As to expression, expressed in the brain.

The protein localises to the nucleus. The protein resides in the chromosome. Its subcellular location is the centromere. It localises to the kinetochore. It is found in the mitochondrion. The protein localises to the cytoplasm. The protein resides in the cytoskeleton. Its subcellular location is the spindle pole. In terms of biological role, non-catalytic component of the NSL histone acetyltransferase complex, a multiprotein complex that mediates histone H4 acetylation at 'Lys-5'- and 'Lys-8' (H4K5ac and H4K8ac) at transcription start sites and promotes transcription initiation. The NSL complex also acts as a regulator of gene expression in mitochondria. In addition to its role in transcription, KANSL1 also plays an essential role in spindle assembly during mitosis. Associates with microtubule ends and contributes to microtubule stability. In Homo sapiens (Human), this protein is KAT8 regulatory NSL complex subunit 1 (KANSL1).